The sequence spans 276 residues: Large ribosomal subunit protein uL2 (276 aa).

The interval 203-276 is disordered; it reads NVSSGKAGRT…SDKFIVKRRK (74 aa). The segment covering 210–220 has biased composition (basic residues); the sequence is GRTRWLGRRPQ. The segment covering 265 to 276 has biased composition (basic and acidic residues); that stretch reads KPSDKFIVKRRK.

It belongs to the universal ribosomal protein uL2 family. Part of the 50S ribosomal subunit. Forms a bridge to the 30S subunit in the 70S ribosome.

Functionally, one of the primary rRNA binding proteins. Required for association of the 30S and 50S subunits to form the 70S ribosome, for tRNA binding and peptide bond formation. It has been suggested to have peptidyltransferase activity; this is somewhat controversial. Makes several contacts with the 16S rRNA in the 70S ribosome. The polypeptide is Large ribosomal subunit protein uL2 (Coprothermobacter proteolyticus (strain ATCC 35245 / DSM 5265 / OCM 4 / BT)).